We begin with the raw amino-acid sequence, 401 residues long: NADH-dependent flavin oxidoreductase iliE (401 aa).

FMN-binding positions include A25–S28 and Q107. H188–H191 serves as a coordination point for substrate. Residue A346–R347 participates in FMN binding.

It belongs to the NADH:flavin oxidoreductase/NADH oxidase family.

Its function is as follows. NADH-dependent flavin oxidoreductase; part of the gene cluster that mediates the biosynthesis of ilicicolin H, a 4-hydroxy-2-pyridonealkaloid that has potent and broad antifungal activities by inhibiting the mitochondrial respiration chain. The biosynthesis of ilicicolin H starts with formation of the tetramic acid by the hybrid PKS-NRPS synthetase iliA with the partnering trans-enoyl reductase iliB since iliA lacks a designated enoylreductase (ER) domain. The cytochrome P450 monooxygenase iliC then catalyzes the ring expansion of the tetramate to the acyclic 2-pyridone. The pericyclase iliD further converts the acyclic 2-pyridone into 8-epi-ilicicolin H. 8-epi-ilicicolin H might then spontaneously convert to ilicicolin H since ilicicolin H is produced in the absence of the epimerase iliE, in contrast to what was observed for the Talaromyces variabilis ilicolin H biosynthetic pathway. The chain is NADH-dependent flavin oxidoreductase iliE from Hypocrea jecorina (strain QM6a) (Trichoderma reesei).